Here is a 240-residue protein sequence, read N- to C-terminus: Probable transcriptional regulatory protein MS53_0373 (240 aa).

Belongs to the TACO1 family.

The protein localises to the cytoplasm. The sequence is that of Probable transcriptional regulatory protein MS53_0373 from Mycoplasmopsis synoviae (strain 53) (Mycoplasma synoviae).